Here is a 520-residue protein sequence, read N- to C-terminus: L-tyrosine:2-oxoglutarate aminotransferase amt1 (520 aa).

Belongs to the class-I pyridoxal-phosphate-dependent aminotransferase family. The cofactor is pyridoxal 5'-phosphate.

It catalyses the reaction L-tyrosine + 2-oxoglutarate = 3-(4-hydroxyphenyl)pyruvate + L-glutamate. It participates in secondary metabolite biosynthesis. Functionally, an L-tyrosine:2-oxoglutarate aminotransferase (probably amt1) and atromentin synthetase nps3 catalyze consecutive steps to turn over L-tyrosine into atromentin, which represents the generic precursor molecule for the entire terphenylquinone and pulvinic acid family of pigments, which are widely distributed secondary metabolites in homobasidiomycetes. The first step catalyzed by amt1 converts L-tyrosine in to 4-hydroxyphenylpyruvate (4-HPP). Adenylation of two 4-HPP monomers by the nps3 adenylation (A) domain, covalent tethering of the monomers as a thioester and oxoester onto the nps3 thiolation (T) and thioesterase (TE) domains, respectively, and symmetric C-C-bond formation between two monomers catalyzed by the nps3 TE domain leads to atromentin. Follow-up products of atromentin in S.lacrymans include atromentic acid, xerocomic acid, isoxerocomic acid and variegatic acid. This is L-tyrosine:2-oxoglutarate aminotransferase amt1 (amt1) from Serpula lacrymans var. lacrymans (strain S7.9) (Dry rot fungus).